The chain runs to 242 residues: Phosphate import ATP-binding protein PstB 1 (242 aa).

The region spanning 1–237 is the ABC transporter domain; that stretch reads MDLYYGSYRA…PKDQRTEDYI (237 aa). An ATP-binding site is contributed by 28–35; the sequence is GPSGCGKS.

This sequence belongs to the ABC transporter superfamily. Phosphate importer (TC 3.A.1.7) family. In terms of assembly, the complex is composed of two ATP-binding proteins (PstB), two transmembrane proteins (PstC and PstA) and a solute-binding protein (PstS).

Its subcellular location is the cell membrane. It catalyses the reaction phosphate(out) + ATP + H2O = ADP + 2 phosphate(in) + H(+). Part of the ABC transporter complex PstSACB involved in phosphate import. Responsible for energy coupling to the transport system. The sequence is that of Phosphate import ATP-binding protein PstB 1 from Symbiobacterium thermophilum (strain DSM 24528 / JCM 14929 / IAM 14863 / T).